A 549-amino-acid chain; its full sequence is Cilia- and flagella-associated protein 45 (549 aa).

The tract at residues 1-29 (MPLSPAGVLSSTSTASNRSRNRPRYRTKA) is disordered. 3 coiled-coil regions span residues 119–232 (REEL…MMEV), 259–393 (IVEQ…KRNQ), and 434–522 (AVQV…KIEE). A disordered region spans residues 388–416 (RAKRNQEVADREWRRKEKENAQKKMETEA).

The protein belongs to the CFAP45 family. As to quaternary structure, microtubule inner protein component of sperm flagellar doublet microtubules. Interacts with AK8; dimerization with AK8 may create a cavity at the interface of the dimer that can accommodate AMP. Interacts with CFAP52. Interacts with ENKUR. Directly interacts with DNALI1. Interacts with DNAH11. Interacts with DNAI1. As to expression, expressed in respiratory cells (at protein level).

It localises to the cytoplasm. Its subcellular location is the cytoskeleton. The protein localises to the cilium axoneme. It is found in the flagellum axoneme. The protein resides in the cell projection. It localises to the cilium. Its subcellular location is the flagellum. Functionally, microtubule inner protein (MIP) part of the dynein-decorated doublet microtubules (DMTs) in cilia axoneme, which is required for motile cilia beating. It is an AMP-binding protein that may facilitate dynein ATPase-dependent ciliary and flagellar beating via adenine nucleotide homeostasis. May function as a donor of AMP to AK8 and hence promote ADP production. This is Cilia- and flagella-associated protein 45 (CFAP45) from Sus scrofa (Pig).